Consider the following 185-residue polypeptide: Threonylcarbamoyl-AMP synthase (185 aa).

In terms of domain architecture, YrdC-like spans aspartate 4 to alanine 185.

Belongs to the SUA5 family. TsaC subfamily.

It is found in the cytoplasm. It catalyses the reaction L-threonine + hydrogencarbonate + ATP = L-threonylcarbamoyladenylate + diphosphate + H2O. Its function is as follows. Required for the formation of a threonylcarbamoyl group on adenosine at position 37 (t(6)A37) in tRNAs that read codons beginning with adenine. Catalyzes the conversion of L-threonine, HCO(3)(-)/CO(2) and ATP to give threonylcarbamoyl-AMP (TC-AMP) as the acyladenylate intermediate, with the release of diphosphate. In Stutzerimonas stutzeri (strain A1501) (Pseudomonas stutzeri), this protein is Threonylcarbamoyl-AMP synthase.